The following is a 79-amino-acid chain: Conotoxin ArMSGL-0123 (79 aa).

Positions 1 to 20 (MSRLGIMVLTLLLLVFIVTS) are cleaved as a signal peptide. The propeptide occupies 21–44 (HQDAGEKQATKRAAVNFRWRRSFT). 3 disulfides stabilise this stretch: C52/C64, C56/C73, and C63/C77. L78 bears the Leucine amide mark.

Belongs to the conotoxin O3 superfamily. In terms of tissue distribution, expressed by the venom duct.

It localises to the secreted. The chain is Conotoxin ArMSGL-0123 from Conus arenatus (Sand-dusted cone).